The chain runs to 312 residues: MKVAVLGAAGGIGQALALLLKTQLPSGSELSLYDIAPVTPGVAVDLSHIPTAVKIKGFAGEDATPALEGADVVLISAGVARKPGMDRSDLFNVNAGIVKNLVQQIATTCPKACIGIITNPVNTTVAIAAEVLKKAGVYDKNKLFGVTTLDIIRSNTFVAELKGKQPDEIEVPVIGGHSGVTILPLLSQIPGVSFTEQEVADLTKRIQNAGTEVVEAKAGGGSATLSMGQAAARFGLSLVRALQGEKGVVECAYVEGDGQYARFFSQPLLLGKNGVEERKSIGKLSAFEQNALEGMLDTLKKDIQLGEAFVNK.

Residues 7-13 (GAAGGIG) and aspartate 34 contribute to the NAD(+) site. Substrate-binding residues include arginine 81 and arginine 87. NAD(+) is bound by residues asparagine 94 and 117–119 (ITN). Asparagine 119 and arginine 153 together coordinate substrate. Histidine 177 functions as the Proton acceptor in the catalytic mechanism. Methionine 227 contributes to the NAD(+) binding site.

It belongs to the LDH/MDH superfamily. MDH type 1 family. As to quaternary structure, homodimer.

The catalysed reaction is (S)-malate + NAD(+) = oxaloacetate + NADH + H(+). In terms of biological role, catalyzes the reversible oxidation of malate to oxaloacetate. The sequence is that of Malate dehydrogenase from Escherichia fergusonii (strain ATCC 35469 / DSM 13698 / CCUG 18766 / IAM 14443 / JCM 21226 / LMG 7866 / NBRC 102419 / NCTC 12128 / CDC 0568-73).